Here is a 379-residue protein sequence, read N- to C-terminus: Homoserine O-succinyltransferase (379 aa).

One can recognise an AB hydrolase-1 domain in the interval 51–360 (NAVLICHALS…DAPQGHDAFL (310 aa)). The active-site Nucleophile is the S157. R227 lines the substrate pocket. Residues D323 and H356 contribute to the active site. A substrate-binding site is contributed by D357.

Belongs to the AB hydrolase superfamily. MetX family. Homodimer.

The protein resides in the cytoplasm. The enzyme catalyses L-homoserine + succinyl-CoA = O-succinyl-L-homoserine + CoA. Its pathway is amino-acid biosynthesis; L-methionine biosynthesis via de novo pathway; O-succinyl-L-homoserine from L-homoserine: step 1/1. Transfers a succinyl group from succinyl-CoA to L-homoserine, forming succinyl-L-homoserine. This chain is Homoserine O-succinyltransferase, found in Pseudomonas aeruginosa (strain UCBPP-PA14).